The primary structure comprises 133 residues: Small ribosomal subunit protein uS8 (133 aa).

This sequence belongs to the universal ribosomal protein uS8 family. As to quaternary structure, part of the 30S ribosomal subunit. Contacts proteins S5 and S12.

One of the primary rRNA binding proteins, it binds directly to 16S rRNA central domain where it helps coordinate assembly of the platform of the 30S subunit. In Synechococcus sp. (strain RCC307), this protein is Small ribosomal subunit protein uS8.